Consider the following 319-residue polypeptide: tRNA-modifying protein YgfZ (319 aa).

Residues Trp27 and Trp189 each coordinate folate.

This sequence belongs to the tRNA-modifying YgfZ family.

Its subcellular location is the cytoplasm. In terms of biological role, folate-binding protein involved in regulating the level of ATP-DnaA and in the modification of some tRNAs. It is probably a key factor in regulatory networks that act via tRNA modification, such as initiation of chromosomal replication. This Buchnera aphidicola subsp. Acyrthosiphon pisum (strain APS) (Acyrthosiphon pisum symbiotic bacterium) protein is tRNA-modifying protein YgfZ.